The sequence spans 195 residues: Probable nicotinate-nucleotide adenylyltransferase (195 aa).

Belongs to the NadD family.

The catalysed reaction is nicotinate beta-D-ribonucleotide + ATP + H(+) = deamido-NAD(+) + diphosphate. It participates in cofactor biosynthesis; NAD(+) biosynthesis; deamido-NAD(+) from nicotinate D-ribonucleotide: step 1/1. Catalyzes the reversible adenylation of nicotinate mononucleotide (NaMN) to nicotinic acid adenine dinucleotide (NaAD). This Bordetella petrii (strain ATCC BAA-461 / DSM 12804 / CCUG 43448) protein is Probable nicotinate-nucleotide adenylyltransferase.